A 171-amino-acid polypeptide reads, in one-letter code: UPF0690 protein C1orf52 homolog A (171 aa).

2 disordered regions span residues 1–56 (MAAE…GPDE) and 126–171 (NVYQ…KRKV). A compositionally biased stretch (basic and acidic residues) spans 47–56 (EAKKLPGPDE). The span at 146–160 (EEEAQEDSPPSDDEQ) shows a compositional bias: acidic residues.

This sequence belongs to the UPF0690 family.

The chain is UPF0690 protein C1orf52 homolog A from Xenopus laevis (African clawed frog).